A 607-amino-acid polypeptide reads, in one-letter code: CUB and zona pellucida-like domain-containing protein 1 (607 aa).

The N-terminal stretch at 1 to 24 (MELVRRLMPLTLLILSCLAELTMA) is a signal peptide. Residues cysteine 17 and cysteine 58 are joined by a disulfide bond. 2 consecutive CUB domains span residues 25 to 146 (EAEG…YFFS) and 154 to 265 (CGGY…YTSI). Residues 25–568 (EAEGNASCTV…EETPNQPFNS (544 aa)) lie on the Lumenal side of the membrane. N-linked (GlcNAc...) asparagine glycans are attached at residues asparagine 29, asparagine 57, and asparagine 67. Intrachain disulfides connect cysteine 85–cysteine 107, cysteine 154–cysteine 180, and cysteine 207–cysteine 229. The region spanning 276–519 (TCSSDRMRVI…SRCNQGCVSR (244 aa)) is the ZP domain. N-linked (GlcNAc...) asparagine glycosylation is found at asparagine 394 and asparagine 419. A disulfide bridge links cysteine 442 with cysteine 498. Residues 569-589 (VHLFSFMVLALNVVTVATITV) traverse the membrane as a helical segment. The Cytoplasmic segment spans residues 590 to 607 (RHFVNQRADYKYQKLQNY).

In terms of tissue distribution, detected in pancreas and epithelium of ovary. Expressed at higher levels in ovarian tumors than in normal tissue.

It is found in the zymogen granule membrane. Functionally, localized to zymogen granules, where it functions in trypsinogen activation. May indirectly regulate cell motility, cell-cell and cell/extracellular matrix interactions. The protein is CUB and zona pellucida-like domain-containing protein 1 of Homo sapiens (Human).